A 70-amino-acid polypeptide reads, in one-letter code: DNA gyrase inhibitor YacG (70 aa).

Zn(2+)-binding residues include Cys-7, Cys-10, Cys-26, and Cys-30.

This sequence belongs to the DNA gyrase inhibitor YacG family. As to quaternary structure, interacts with GyrB. It depends on Zn(2+) as a cofactor.

Inhibits all the catalytic activities of DNA gyrase by preventing its interaction with DNA. Acts by binding directly to the C-terminal domain of GyrB, which probably disrupts DNA binding by the gyrase. This Shewanella woodyi (strain ATCC 51908 / MS32) protein is DNA gyrase inhibitor YacG.